A 296-amino-acid chain; its full sequence is GTPase Era (296 aa).

Residues 3 to 170 form the Era-type G domain; that stretch reads KSGFVTIVGR…KELMFKYIPE (168 aa). A G1 region spans residues 11–18; sequence GRPNVGKS. Residue 11 to 18 coordinates GTP; the sequence is GRPNVGKS. A G2 region spans residues 37–41; the sequence is QTTRN. The G3 stretch occupies residues 58–61; that stretch reads DTPG. Residues 58 to 62 and 120 to 123 each bind GTP; these read DTPGI and NKID. Residues 120–123 form a G4 region; that stretch reads NKID. The segment at 149 to 151 is G5; sequence ISA. Positions 201-278 constitute a KH type-2 domain; the sequence is LSEEVPHGIA…YIRLWVKVKE (78 aa).

The protein belongs to the TRAFAC class TrmE-Era-EngA-EngB-Septin-like GTPase superfamily. Era GTPase family. In terms of assembly, monomer.

Its subcellular location is the cytoplasm. It localises to the cell membrane. Its function is as follows. An essential GTPase that binds both GDP and GTP, with rapid nucleotide exchange. Plays a role in 16S rRNA processing and 30S ribosomal subunit biogenesis and possibly also in cell cycle regulation and energy metabolism. The chain is GTPase Era from Clostridium botulinum (strain Loch Maree / Type A3).